Reading from the N-terminus, the 471-residue chain is Fructokinase-like 1, chloroplastic (471 aa).

A chloroplast-targeting transit peptide spans M1–K38. Positions T36–P85 are disordered. Residues A39–K57 are compositionally biased toward polar residues. The segment covering P58–Q67 has biased composition (basic residues).

It belongs to the carbohydrate kinase PfkB family. As to quaternary structure, interacts with CITRX/TRXz. Interacts with PTAC7. Self-interacts. Binds to FLN2. Associates with the plastid-encoded RNA polymerase (PEP) complex.

Its subcellular location is the plastid. It is found in the chloroplast. Its function is as follows. Required for proper chloroplast development, most likely through regulating plastid-encoded polymerase (PEP) dependent chloroplast transcription. Acts as a component of the transcriptionally active plastid chromosome that is required for plastid gene expression. In Arabidopsis thaliana (Mouse-ear cress), this protein is Fructokinase-like 1, chloroplastic.